The primary structure comprises 197 residues: GTP cyclohydrolase-2 (197 aa).

Position 50-54 (50-54) interacts with GTP; the sequence is RIHSE. Zn(2+) contacts are provided by Cys55, Cys66, and Cys68. Residues Gln71, 93–95, and Thr115 contribute to the GTP site; that span reads EGR. Asp127 functions as the Proton acceptor in the catalytic mechanism. The active-site Nucleophile is Arg129. GTP is bound by residues Thr150 and Lys155.

This sequence belongs to the GTP cyclohydrolase II family. Zn(2+) is required as a cofactor.

It carries out the reaction GTP + 4 H2O = 2,5-diamino-6-hydroxy-4-(5-phosphoribosylamino)-pyrimidine + formate + 2 phosphate + 3 H(+). It participates in cofactor biosynthesis; riboflavin biosynthesis; 5-amino-6-(D-ribitylamino)uracil from GTP: step 1/4. Catalyzes the conversion of GTP to 2,5-diamino-6-ribosylamino-4(3H)-pyrimidinone 5'-phosphate (DARP), formate and pyrophosphate. The polypeptide is GTP cyclohydrolase-2 (Tolumonas auensis (strain DSM 9187 / NBRC 110442 / TA 4)).